Here is a 2266-residue protein sequence, read N- to C-terminus: Protein ELYS (2266 aa).

Residues 1–494 are seven-bladed beta propeller repeats; that stretch reads MRDLRAQVTS…SGVVHLTCTG (494 aa). The segment at 1-981 is necessary for cytoplasmic localization; it reads MRDLRAQVTS…QTLKINVMND (981 aa). Phosphoserine is present on residues serine 509, serine 528, serine 1080, serine 1138, serine 1142, serine 1150, serine 1153, serine 1155, and serine 1160. Residues 591 to 1092 are important for nuclear localization; that stretch reads VVLTKEEFDR…IEEPSPIVYS (502 aa). The interval 1019–2266 is disordered; that stretch reads YHLSTSSVFR…PKQILRRKML (1248 aa). The interval 1149-2266 is necessary for nuclear localization; the sequence is RSLPSSSQLK…PKQILRRKML (1118 aa). Threonine 1175 is subject to Phosphothreonine. A phosphoserine mark is found at serine 1214, serine 1218, serine 1222, serine 1232, and serine 1250. Threonine 1257 is modified (phosphothreonine). Phosphoserine is present on residues serine 1283 and serine 1297. Composition is skewed to polar residues over residues 1305-1320 and 1335-1353; these read KGNS…TTLE and FTAS…NVTE. Position 1369 is a phosphothreonine (threonine 1369). A phosphoserine mark is found at serine 1371 and serine 1513. The tract at residues 1446-1698 is mediates transcriptional activity; sequence RANDNKSMAD…MEQSIHETIP (253 aa). Phosphothreonine is present on threonine 1517. Residues serine 1533, serine 1541, serine 1729, and serine 1806 each carry the phosphoserine modification. Composition is skewed to polar residues over residues 1796–1808 and 1822–1838; these read LSQN…NSVT and ILEN…ITTG. Phosphothreonine is present on threonine 1808. An important for nuclear localization and chromatin binding region spans residues 1842 to 2266; the sequence is KRLKSSQLLE…PKQILRRKML (425 aa). Phosphoserine occurs at positions 1878, 1884, and 1898. Polar residues predominate over residues 1908-1919; that stretch reads STNLDASENTGN. Basic and acidic residues-rich tracts occupy residues 1920-1930 and 1940-1952; these read KQDDKSSDKQL and GREV…REDS. Phosphoserine is present on residues serine 1944 and serine 1946. The segment at residues 1971–1983 is a DNA-binding region (a.T hook); the sequence is PRKRGRPRKINPS. The segment covering 1986-2004 has biased composition (basic and acidic residues); it reads VGSKAVKEERSPKKKEAPS. Phosphoserine is present on residues serine 1996, serine 2043, serine 2044, and serine 2060. Residues 2064-2084 show a composition bias toward basic and acidic residues; the sequence is VSEERTDEMTHKETNEQEERL. 4 positions are modified to phosphoserine: serine 2089, serine 2120, serine 2123, and serine 2154. The segment covering 2169–2179 has biased composition (basic and acidic residues); it reads NKLEDELKDDA. A compositionally biased stretch (basic residues) spans 2188 to 2197; it reads PKAKRIRTSK. 3 positions are modified to phosphoserine: serine 2212, serine 2222, and serine 2226.

Belongs to the ELYS family. In terms of assembly, associates with the Nup107-160 subcomplex of the NPC.

Its subcellular location is the cytoplasm. It is found in the nucleus. The protein resides in the nucleus envelope. It localises to the nucleus matrix. The protein localises to the chromosome. Its subcellular location is the centromere. It is found in the kinetochore. The protein resides in the nucleoplasm. It localises to the nuclear pore complex. Its function is as follows. Required for the assembly of a functional nuclear pore complex (NPC) on the surface of chromosomes as nuclei form at the end of mitosis. May initiate NPC assembly by binding to chromatin and recruiting the Nup107-160 subcomplex of the NPC. Also required for the localization of the Nup107-160 subcomplex of the NPC to the kinetochore during mitosis and for the completion of cytokinesis. The chain is Protein ELYS (AHCTF1) from Homo sapiens (Human).